Here is a 55-residue protein sequence, read N- to C-terminus: Sec-independent protein translocase protein TatA (55 aa).

Residues 1-21 traverse the membrane as a helical segment; that stretch reads MFGELGVPEVLFILGIALLIF.

It belongs to the TatA/E family. As to quaternary structure, forms a complex with TatC.

The protein localises to the cell inner membrane. Part of the twin-arginine translocation (Tat) system that transports large folded proteins containing a characteristic twin-arginine motif in their signal peptide across membranes. TatA could form the protein-conducting channel of the Tat system. The protein is Sec-independent protein translocase protein TatA of Koribacter versatilis (strain Ellin345).